The primary structure comprises 271 residues: Tryptophan synthase alpha chain (271 aa).

Catalysis depends on proton acceptor residues Glu49 and Asp60.

This sequence belongs to the TrpA family. Tetramer of two alpha and two beta chains.

It carries out the reaction (1S,2R)-1-C-(indol-3-yl)glycerol 3-phosphate + L-serine = D-glyceraldehyde 3-phosphate + L-tryptophan + H2O. It functions in the pathway amino-acid biosynthesis; L-tryptophan biosynthesis; L-tryptophan from chorismate: step 5/5. Its function is as follows. The alpha subunit is responsible for the aldol cleavage of indoleglycerol phosphate to indole and glyceraldehyde 3-phosphate. The sequence is that of Tryptophan synthase alpha chain from Burkholderia lata (strain ATCC 17760 / DSM 23089 / LMG 22485 / NCIMB 9086 / R18194 / 383).